Here is a 790-residue protein sequence, read N- to C-terminus: Nuclear cap-binding protein subunit 1 (790 aa).

Residues 1-26 (MSRRRHSYENDGGQPHKRRKTSDANE) form a disordered region. Residues 3–20 (RRRHSYENDGGQPHKRRK) carry the Nuclear localization signal motif. Ser7 bears the Phosphoserine mark. Residue Thr21 is modified to Phosphothreonine. A phosphoserine mark is found at Ser22 and Ser201. Positions 28–240 (EDHLESLICK…CLWAQIQKLK (213 aa)) constitute an MIF4G domain. Position 204 is an N6-acetyllysine (Lys204). Positions 643–713 (STIRKMNKHV…SEQKNLFLVI (71 aa)) form a coiled coil. Residue Lys684 forms a Glycyl lysine isopeptide (Lys-Gly) (interchain with G-Cter in SUMO2) linkage. Position 698 is an N6-acetyllysine (Lys698).

The protein belongs to the NCBP1 family. In terms of assembly, component of the nuclear cap-binding complex (CBC), a heterodimer composed of NCBP1/CBP80 and NCBP2/CBP20 that interacts with m7GpppG-capped RNA. Found in a U snRNA export complex containing PHAX/RNUXA, NCBP1/CBP80, NCBP2/CBP20, RAN, XPO1 and m7G-capped RNA. Identified in a IGF2BP1-dependent mRNP granule complex containing untranslated mRNAs. Interacts with PHAX/RNUXA, SRRT/ARS2, EIF4G2, IGF2BP1, HNRNPF, HNRNPH1, KIAA0427/CTIF, PARN, DROSHA, UPF1 and ALYREF/THOC4. May interact with EIF4G1; the interaction is however controversial since it is reported by, and, but is not observed by. The large PER complex involved in the repression of transcriptional termination is composed of at least PER2, CDK9, DDX5, DHX9, NCBP1/CBP80 and POLR2A. Component of an alternative nuclear cap-binding complex (CBC) composed of NCBP1/CBP80 and NCBP3. Interacts with METTL3. Interacts with ZFC3H1 in a RNase-insensitive manner. Interacts with MTREX. Interacts with TASOR. Interacts with DHX34; the interaction is RNA-dependent. Interacts with KPNA3. Dephosphorylated at Thr-21 by the PNUTS-PP1 complex during RNA polymerase II transcription pause-release.

The protein resides in the nucleus. Its subcellular location is the cytoplasm. Component of the cap-binding complex (CBC), which binds cotranscriptionally to the 5'-cap of pre-mRNAs and is involved in various processes such as pre-mRNA splicing, translation regulation, nonsense-mediated mRNA decay, RNA-mediated gene silencing (RNAi) by microRNAs (miRNAs) and mRNA export. The CBC complex is involved in mRNA export from the nucleus via its interaction with ALYREF/THOC4/ALY, leading to the recruitment of the mRNA export machinery to the 5'-end of mRNA and to mRNA export in a 5' to 3' direction through the nuclear pore. The CBC complex is also involved in mediating U snRNA and intronless mRNAs export from the nucleus. The CBC complex is essential for a pioneer round of mRNA translation, before steady state translation when the CBC complex is replaced by cytoplasmic cap-binding protein eIF4E. The pioneer round of mRNA translation mediated by the CBC complex plays a central role in nonsense-mediated mRNA decay (NMD), NMD only taking place in mRNAs bound to the CBC complex, but not on eIF4E-bound mRNAs. The CBC complex enhances NMD in mRNAs containing at least one exon-junction complex (EJC) via its interaction with UPF1, promoting the interaction between UPF1 and UPF2. The CBC complex is also involved in 'failsafe' NMD, which is independent of the EJC complex, while it does not participate in Staufen-mediated mRNA decay (SMD). During cell proliferation, the CBC complex is also involved in microRNAs (miRNAs) biogenesis via its interaction with SRRT/ARS2 and is required for miRNA-mediated RNA interference. The CBC complex also acts as a negative regulator of PARN, thereby acting as an inhibitor of mRNA deadenylation. In the CBC complex, NCBP1/CBP80 does not bind directly capped RNAs (m7GpppG-capped RNA) but is required to stabilize the movement of the N-terminal loop of NCBP2/CBP20 and lock the CBC into a high affinity cap-binding state with the cap structure. Associates with NCBP3 to form an alternative cap-binding complex (CBC) which plays a key role in mRNA export and is particularly important in cellular stress situations such as virus infections. The conventional CBC with NCBP2 binds both small nuclear RNA (snRNA) and messenger (mRNA) and is involved in their export from the nucleus whereas the alternative CBC with NCBP3 does not bind snRNA and associates only with mRNA thereby playing a role only in mRNA export. NCBP1/CBP80 is required for cell growth and viability. This chain is Nuclear cap-binding protein subunit 1 (Ncbp1), found in Rattus norvegicus (Rat).